Consider the following 257-residue polypeptide: MSDSSREENVYMAKLADEAERYEEMVEFMEKVAKTVEVEELTVEERNLLSVAYKNVIGARRASWRIISSIEQKEESRGNEDHVAIIKEYRGKIEAELSKICDGILNLLESNLIPSAASPESKVFYLKMKGDYHRYLAEFKTGAERKEAAESTLLAYKSAQDIALADLAPTHPIRLGLALNFSVFYYEILNSPDRACNLAKQAFDEAISELDTLGEESYKDSTLIMQLLRDNLTLWTSDITDIAGDEIKETSKQQPGE.

This sequence belongs to the 14-3-3 family.

In Glycine max (Soybean), this protein is 14-3-3-like protein A (GF14A).